The sequence spans 1574 residues: Synaptojanin-1 (1574 aa).

Residues Val-119–Gly-442 enclose the SAC domain. Residues Ser-820 and Ser-830 each carry the phosphoserine modification. An RRM domain is found at Gly-894–Pro-971. The segment covering His-1029–Pro-1054 has biased composition (low complexity). Residues His-1029–Ser-1327 form a disordered region. Phosphoserine is present on Ser-1053. Residues Ser-1080–Leu-1100 show a composition bias toward polar residues. Residues Pro-1105–Ser-1127 are compositionally biased toward pro residues. Residues Ser-1147 and Ser-1175 each carry the phosphoserine modification. Position 1198 is an omega-N-methylarginine (Arg-1198). Residue Thr-1217 is modified to Phosphothreonine. The segment covering Thr-1268 to Arg-1287 has biased composition (pro residues). Residues Ser-1288 to Pro-1307 are compositionally biased toward low complexity. Residues Ser-1290 and Ser-1350 each carry the phosphoserine modification. Thr-1354 carries the phosphothreonine modification. Disordered regions lie at residues Leu-1363–Pro-1507 and Leu-1532–Arg-1574. 4 stretches are compositionally biased toward polar residues: residues Pro-1364 to Cys-1379, Gln-1393 to Pro-1402, Arg-1424 to Leu-1436, and Asp-1472 to Pro-1484. The 3 X 3 AA repeats of N-P-F stretch occupies residues Phe-1403–Val-1425. A compositionally biased stretch (pro residues) spans Arg-1535 to Pro-1548. Positions Pro-1549 to Ser-1563 are enriched in low complexity. Polar residues predominate over residues Ala-1565–Arg-1574.

This sequence belongs to the synaptojanin family. In the central section; belongs to the inositol 1,4,5-trisphosphate 5-phosphatase family. Interacts with ASH/GRB2. Interacts with PACSIN1, PACSIN2 and PACSIN3. Interacts with AMPH, SH3GL1, SH3GL2 and SH3GL3. Interacts with MYO1E (via SH3 domain). Interacts with BIN1 and DNM1. Interacts with EPS15.

The protein resides in the cytoplasm. It is found in the perinuclear region. The enzyme catalyses a 1,2-diacyl-sn-glycero-3-phospho-(1D-myo-inositol-4,5-bisphosphate) + H2O = a 1,2-diacyl-sn-glycero-3-phospho-(1D-myo-inositol 4-phosphate) + phosphate. Phosphatase that acts on various phosphoinositides, including phosphatidylinositol 4-phosphate, phosphatidylinositol (4,5)-bisphosphate and phosphatidylinositol (3,4,5)-trisphosphate. Has a role in clathrin-mediated endocytosis. Hydrolyzes PIP2 bound to actin regulatory proteins resulting in the rearrangement of actin filaments downstream of tyrosine kinase and ASH/GRB2. This Mus musculus (Mouse) protein is Synaptojanin-1 (Synj1).